The primary structure comprises 226 residues: Thymidylate kinase (226 aa).

An ATP-binding site is contributed by 9–16; sequence GPEGSGKS.

The protein belongs to the thymidylate kinase family.

It catalyses the reaction dTMP + ATP = dTDP + ADP. Functionally, phosphorylation of dTMP to form dTDP in both de novo and salvage pathways of dTTP synthesis. This is Thymidylate kinase from Roseiflexus sp. (strain RS-1).